Here is a 273-residue protein sequence, read N- to C-terminus: MMHRLNLNGYEPDRHHEAAVAFCIHAGTDELTSPVHQHRKGQLILALHGAITCTVENALWMVPPQYAVWIPGGVEHSNQVTANAELCFLFIEPSAVTMPTTCCTLKISPLCRELILTLANRTTTQRAEPMTRRLIQVLFDELPQQPQQQLHLPVSSHPKIRTMVEMMAKGPVEWGALGQWAGFFAMSERNLARLIVKETGLSFRQWRQQLQLIMALQGLVKGDTVQKVAHTLGYDSTTAFITMFKKGLGQTPGRYIARLTTVSPQSAKPDPRQ.

The HTH araC/xylS-type domain occupies 158-258 (PKIRTMVEMM…GQTPGRYIAR (101 aa)). 2 DNA-binding regions (H-T-H motif) span residues 178-199 (GQWA…VKET) and 225-248 (VQKV…KKGL).

Negatively regulates expression of the nimT operon and its own expression. Acts by binding to the nimR-nimT intergenic region. This chain is HTH-type transcriptional regulator NimR, found in Escherichia coli (strain K12).